The primary structure comprises 201 residues: Small ribosomal subunit protein uS5 (201 aa).

The disordered stretch occupies residues 1–28; the sequence is MAGPQRRGSGAGGGERRDRKGRDGGAGA. Over residues 14–23 the composition is skewed to basic and acidic residues; that stretch reads GERRDRKGRD. The region spanning 34–97 is the S5 DRBM domain; sequence YVERVVAINR…EEAKKHFFKV (64 aa).

This sequence belongs to the universal ribosomal protein uS5 family. As to quaternary structure, part of the 30S ribosomal subunit. Contacts proteins S4 and S8.

In terms of biological role, with S4 and S12 plays an important role in translational accuracy. Functionally, located at the back of the 30S subunit body where it stabilizes the conformation of the head with respect to the body. The sequence is that of Small ribosomal subunit protein uS5 from Streptomyces coelicolor (strain ATCC BAA-471 / A3(2) / M145).